A 57-amino-acid chain; its full sequence is Potassium channel toxin alpha-KTx 4.2 (57 aa).

The signal sequence occupies residues 1 to 20; sequence MKVLYGILIIFILCSMFYLS. Residues 21–22 constitute a propeptide, removed by a carboxypeptidase; it reads QE. Cystine bridges form between cysteine 29–cysteine 50, cysteine 35–cysteine 55, and cysteine 39–cysteine 57.

This sequence belongs to the short scorpion toxin superfamily. Potassium channel inhibitor family. Alpha-KTx 04 subfamily. As to expression, expressed by the venom gland.

The protein localises to the secreted. Functionally, blocker for small-conductance calcium-activated potassium channels KCa2.2/KCNN2 (Kd=80 nM) and KCa2.3/KCNN3 (Kd=197 nM) and ERG1/Kv11.1/KCNH2 potassium channels (53% inhibition at 5 uM). Has also been shown to inhibit Kv1.1/KCNA1 and Nav1.7/SCN9A with a moderate potency, as well as Kv11.1/KCNH2/ERG1 and Kv1.2/KCNA2 with a low potency. This is Potassium channel toxin alpha-KTx 4.2 from Tityus serrulatus (Brazilian scorpion).